We begin with the raw amino-acid sequence, 554 residues long: Solute carrier family 22 member 1 (554 aa).

Over 1–21 (MPTVDDVLEQVGEFGWFQKRT) the chain is Cytoplasmic. Residues 22-42 (FLFLCLISAILAPIYLGIVFL) form a helical membrane-spanning segment. Residues 43–149 (GFTPDHRCRS…LVCADAWKVD (107 aa)) are Extracellular-facing. The N-linked (GlcNAc...) asparagine glycan is linked to N71. Residues 150-170 (LFQSCVNLGFFLGSLGVGYIA) traverse the membrane as a helical segment. The Cytoplasmic segment spans residues 171-176 (DRFGRK). Residues 177-197 (LCLLLTTLINAVSGVLTAVAP) traverse the membrane as a helical segment. At 198–206 (DYTSMLLFR) the chain is on the extracellular side. The chain crosses the membrane as a helical span at residues 207-229 (LLQGLVSKGSWMSGYTLITEFVG). The Cytoplasmic portion of the chain corresponds to 230–237 (SGYRRTVA). A helical transmembrane segment spans residues 238–258 (ILYQVAFSVGLVALSGVAYAI). Topologically, residues 259–262 (PNWR) are extracellular. A helical membrane pass occupies residues 263–283 (WLQLTVSLPTFLCLFYYWCVP). Positions 283-287 (PESPR) match the Proline-rich sequence motif. Topologically, residues 284 to 347 (ESPRWLLSQK…FRTPNLRKHT (64 aa)) are cytoplasmic. S333 is subject to Phosphoserine. A helical transmembrane segment spans residues 348–368 (FILMFLWFTCSVLYQGLILHM). The Extracellular segment spans residues 369–374 (GATGGN). The chain crosses the membrane as a helical span at residues 375–395 (VYLDFFYSSLVEFPAAFVILV). Topologically, residues 396-402 (TIDRVGR) are cytoplasmic. Residues 403-423 (IYPMAASNLAAGVASVILIFV) form a helical membrane-spanning segment. The Extracellular portion of the chain corresponds to 424-431 (PQDLHWLT). Residues 432–452 (IVLSCVGRMGATIVLQMICLV) traverse the membrane as a helical segment. Residues 453 to 464 (NAELYPTFVRNL) lie on the Cytoplasmic side of the membrane. A helical membrane pass occupies residues 465–485 (GVMVCSALCDVGGIITPFMVF). At 486 to 492 (RLMEVWQ) the chain is on the extracellular side. The helical transmembrane segment at 493–513 (PLPLIVFGVLGLLAGGMTLLL) threads the bilayer. Residues 514-554 (PETKGVALPETIEDAENLRRKAKPKESKIYLQVQTSELKGP) lie on the Cytoplasmic side of the membrane.

It belongs to the major facilitator (TC 2.A.1) superfamily. Organic cation transporter (TC 2.A.1.19) family. Phosphorylated. Expressed in kidney, liver and intestine.

It is found in the basolateral cell membrane. It localises to the apical cell membrane. The protein localises to the lateral cell membrane. Its subcellular location is the basal cell membrane. It carries out the reaction 1-methylnicotinamide(out) = 1-methylnicotinamide(in). The enzyme catalyses dopamine(out) = dopamine(in). The catalysed reaction is serotonin(out) = serotonin(in). It catalyses the reaction (R)-adrenaline(out) = (R)-adrenaline(in). It carries out the reaction (R)-noradrenaline(out) = (R)-noradrenaline(in). The enzyme catalyses histamine(out) = histamine(in). The catalysed reaction is guanidine(out) = guanidine(in). It catalyses the reaction choline(out) = choline(in). It carries out the reaction acetylcholine(in) = acetylcholine(out). The enzyme catalyses thiamine(in) = thiamine(out). The catalysed reaction is spermidine(in) = spermidine(out). It catalyses the reaction agmatine(out) = agmatine(in). It carries out the reaction putrescine(out) = putrescine(in). The enzyme catalyses (R)-carnitine(in) = (R)-carnitine(out). The catalysed reaction is O-isobutanoyl-(R)-carnitine(in) = O-isobutanoyl-(R)-carnitine(out). It catalyses the reaction O-acetyl-(R)-carnitine(in) = O-acetyl-(R)-carnitine(out). It carries out the reaction O-3-hydroxybutanoyl-(R)-carnitine(in) = O-3-hydroxybutanoyl-(R)-carnitine(out). The enzyme catalyses O-propanoyl-(R)-carnitine(in) = O-propanoyl-(R)-carnitine(out). The catalysed reaction is O-butanoyl-(R)-carnitine(in) = O-butanoyl-(R)-carnitine(out). It catalyses the reaction O-2-methylbutanoyl-(R)-carnitine(in) = O-2-methylbutanoyl-(R)-carnitine(out). It carries out the reaction O-3-methylbutanoyl-(R)-carnitine(in) = O-3-methylbutanoyl-(R)-carnitine(out). The enzyme catalyses O-hexanoyl-(R)-carnitine(in) = O-hexanoyl-(R)-carnitine(out). The catalysed reaction is L-histidyl-L-proline diketopiperazine(in) = L-histidyl-L-proline diketopiperazine(out). It catalyses the reaction (R)-salsolinol(in) = (R)-salsolinol(out). It carries out the reaction prostaglandin F2alpha(out) = prostaglandin F2alpha(in). The enzyme catalyses prostaglandin E2(out) = prostaglandin E2(in). With respect to regulation, phosphorylation of the transporter leads to changes in its substrate affinity, resulting in a regulation of the transport activity. In contrast with rat ortholog, ASP uptake is inhibited by protein kinase A (PKA) and C (PKC) activation. ASP uptake is also endogenously activated by calmodulin, the calmodulin-dependent kinase II and LCK tyrosine kinase. Inhibited by cGMP, most likely through a cGMP-binding protein that interacts with OCT1. In terms of biological role, electrogenic voltage-dependent transporter that mediates the transport of a variety of organic cations such as endogenous bioactive amines, cationic drugs and xenobiotics. Functions as a pH- and Na(+)-independent, bidirectional transporter. Cation cellular uptake or release is driven by the electrochemical potential (i.e. membrane potential and concentration gradient) and substrate selectivity. Hydrophobicity is a major requirement for recognition in polyvalent substrates and inhibitors. Primarily expressed in the basolateral membrane of hepatocytes and proximal tubules and involved in the uptake and disposition of cationic compounds from the blood by hepatic and renal clearance. Most likely functions as an uptake carrier in enterocytes contributing to the intestinal elimination of organic cations from the systemic circulation. Transports endogenous monoamines such as N-1-methylnicotinamide (NMN), guanidine, neurotransmitters dopamine, serotonin, noradrenaline, adrenaline and histamine, and quaternary ammonium compound such as choline. Also transports natural polyamines such as spermidine, agmatine and putrescine at low affinity, but relatively high turnover. Involved in the hepatic and intestinal uptake of the vitamin B1/thiamine, hence regulating hepatic lipid and energy metabolism. Contributes to the influx and efflux of fatty acid carriers carnitines and acylcarnitines across the basolateral membrane of hepatocytes, from the liver to the systemic circulation and inversely and may be involved in regulating the systemic availability of hepatic acylcarnitines. Also capable of transporting non-amine endogenous compounds such as prostaglandin E2 (PGE2) and prostaglandin F2-alpha (PGF2-alpha). May contribute to the transport of cationic compounds in testes across the blood-testis-barrier. Also mediates the uptake of xenobiotics tributylmethylammonium (TBuMA), quinidine, N-methyl-quinine (NMQ), N-methyl-quinidine (NMQD) N-(4,4-azo-n-pentyl)-quinuclidine (APQ), azidoprocainamide methoiodide (AMP), N-(4,4-azo-n-pentyl)-21-deoxyajmalinium (APDA) and 4-(4-(dimethylamino)styryl)-N-methylpyridinium (ASP). This chain is Solute carrier family 22 member 1 (SLC22A1), found in Oryctolagus cuniculus (Rabbit).